The sequence spans 138 residues: Basic phospholipase A2 ammodytoxin A (138 aa).

The N-terminal stretch at 1 to 16 (MRTLWIVAVCLIGVEG) is a signal peptide. Cystine bridges form between C42–C131, C44–C60, C59–C111, C65–C138, C66–C104, C73–C97, and C91–C102. Ca(2+) is bound by residues Y43, G45, and G47. H63 is a catalytic residue. Residue D64 coordinates Ca(2+). Residue D105 is part of the active site.

This sequence belongs to the phospholipase A2 family. Group II subfamily. D49 sub-subfamily. In terms of assembly, monomer. Binds to calmodulin, coagulation factor X (F10), M-type PLA2 receptor (R-180). May also bind to 14-3-3 proteins gamma (YWHAG) and epsilon (YWHAE), and R25, a mitochondrial membrane protein. The cofactor is Ca(2+). Expressed by the venom gland.

It is found in the secreted. The protein localises to the host cytoplasm. It localises to the host cytosol. The catalysed reaction is a 1,2-diacyl-sn-glycero-3-phosphocholine + H2O = a 1-acyl-sn-glycero-3-phosphocholine + a fatty acid + H(+). Snake venom phospholipase A2 (PLA2) that acts as a presynaptic neurotoxin, an inhibitor of blood coagulation, and has been found to bind with high affinity to intracellular proteins. The response of indirectly stimulated neuromuscular preparations to ammodytoxin (Atx) is triphasic. The first phase, the transient inhibition of the acetylcholine (ACh) release, starts soon after the addition of Atx and lasts for several minutes. This phase is probably independent of Atx enzymatic activity. The effect may be due to the specific binding of the toxin to presynaptic receptors. These receptors, called N-type receptors, are still unidentified. It is noteworthy that a neuronal isoform of the M-type PLA2 receptor (R180) has been identified as a high-affinity receptor for Atx in neuronal plasma membranes. It was demonstrated however that this receptor is not essential for expression of neurotoxicity by Atx. The second phase corresponds to an augmentation of neurotransmitter release. A peak is reached 10-20 minutes after exposure of the preparation to Atx and is followed by a gradual reduction. In this phase, the enzymatic activity of Atx of the mammalian is not significant. It is speculated that the increased release of neurotransmitter in this phase is induced by the interference of Atx with voltage-gated potassium channels. Measurements of ionic currents showed however that voltage-gated potassium channels are not affected by Atx. The third phase of the response of neuromuscular preparations to Atx, which corresponds to a complete and irreversible paralysis, is clearly dependent on the hydrolytic activity of the toxin. In addition to its presynaptic neurotoxicity, Atx shows an anticoagulant activity by binding with high affinity to activated coagulation factor X (F10) thus inhibiting the formation of the prothrombinase complex (FX/FV) and its activity (IC(50) is 20 nM). Surprisingly, Atx was discovered to bind intracellular proteins such as calmodulin (CaM) (IC(50) is 6 nM), 14-3-3 proteins gamma (YWHAG) and epsilon (YWHAE) (by similarity with AtxC), as well as R25 (by similarity with AtxC), a mitochondrial integral membrane protein found in cerebral cortex. These findings raised a doubt about the dogma of the exclusively extracellular action of PLA2s, defended by the potential instability of these molecules in the reducing environment of the eukaryotic cytosol coupled with their possible inability to act as enzymes in this cellular compartment, due to too low concentration of calcium ions. This hypothesis was challenged efficiently by demonstrating the internalization of AtxA into a culture cells, but still remains to be directly demonstrated in vivo. PLA2 catalyzes the calcium-dependent hydrolysis of the 2-acyl groups in 3-sn-phosphoglycerides. In Vipera ammodytes ammodytes (Western sand viper), this protein is Basic phospholipase A2 ammodytoxin A.